The primary structure comprises 481 residues: Inosine-5'-monophosphate dehydrogenase (481 aa).

2 CBS domains span residues 92–148 (VIND…SKKV) and 152–209 (MTKM…PEAN). Residues Asp-244 and 293–295 (GIG) each bind NAD(+). Gly-295 and Gly-297 together coordinate K(+). Ser-298 contacts IMP. Position 300 (Cys-300) interacts with K(+). Cys-300 functions as the Thioimidate intermediate in the catalytic mechanism. Residues 333-335 (DGG), 356-357 (GS), and 380-384 (YRGMG) each bind IMP. Arg-396 functions as the Proton acceptor in the catalytic mechanism. Glu-410 lines the IMP pocket. The K(+) site is built by Glu-464, Ser-465, and His-466.

The protein belongs to the IMPDH/GMPR family. As to quaternary structure, homotetramer. K(+) is required as a cofactor.

It catalyses the reaction IMP + NAD(+) + H2O = XMP + NADH + H(+). Its pathway is purine metabolism; XMP biosynthesis via de novo pathway; XMP from IMP: step 1/1. With respect to regulation, mycophenolic acid (MPA) is a non-competitive inhibitor that prevents formation of the closed enzyme conformation by binding to the same site as the amobile flap. In contrast, mizoribine monophosphate (MZP) is a competitive inhibitor that induces the closed conformation. MPA is a potent inhibitor of mammalian IMPDHs but a poor inhibitor of the bacterial enzymes. MZP is a more potent inhibitor of bacterial IMPDH. Functionally, catalyzes the conversion of inosine 5'-phosphate (IMP) to xanthosine 5'-phosphate (XMP), the first committed and rate-limiting step in the de novo synthesis of guanine nucleotides, and therefore plays an important role in the regulation of cell growth. The sequence is that of Inosine-5'-monophosphate dehydrogenase from Helicobacter pylori (strain ATCC 700392 / 26695) (Campylobacter pylori).